Consider the following 316-residue polypeptide: L-lactate dehydrogenase 3 (316 aa).

Positions 16, 37, 42, and 68 each coordinate NAD(+). R91 is a binding site for substrate. NAD(+) is bound by residues S104, 121 to 123, and T146; that span reads ASN. Position 123-126 (123-126) interacts with substrate; it reads NPVD. 151-154 is a substrate binding site; sequence DSSR. Residues R156 and H171 each contribute to the beta-D-fructose 1,6-bisphosphate site. The Proton acceptor role is filled by H178. T233 contributes to the substrate binding site.

It belongs to the LDH/MDH superfamily. LDH family. In terms of assembly, homotetramer.

The protein localises to the cytoplasm. It carries out the reaction (S)-lactate + NAD(+) = pyruvate + NADH + H(+). Its pathway is fermentation; pyruvate fermentation to lactate; (S)-lactate from pyruvate: step 1/1. Its activity is regulated as follows. Allosterically activated by fructose 1,6-bisphosphate (FBP). Functionally, catalyzes the conversion of lactate to pyruvate. This chain is L-lactate dehydrogenase 3, found in Bacillus cereus (strain ATCC 14579 / DSM 31 / CCUG 7414 / JCM 2152 / NBRC 15305 / NCIMB 9373 / NCTC 2599 / NRRL B-3711).